The primary structure comprises 408 residues: LL-diaminopimelate aminotransferase (408 aa).

Substrate-binding residues include Tyr-15 and Gly-42. Residues Tyr-72, 108–109, Tyr-132, Asn-187, Tyr-218, and 246–248 contribute to the pyridoxal 5'-phosphate site; these read SK and SFS. 3 residues coordinate substrate: Lys-109, Tyr-132, and Asn-187. At Lys-249 the chain carries N6-(pyridoxal phosphate)lysine. Pyridoxal 5'-phosphate-binding residues include Arg-257 and Asn-292. Residues Asn-292 and Arg-388 each contribute to the substrate site.

This sequence belongs to the class-I pyridoxal-phosphate-dependent aminotransferase family. LL-diaminopimelate aminotransferase subfamily. As to quaternary structure, homodimer. Requires pyridoxal 5'-phosphate as cofactor.

The enzyme catalyses (2S,6S)-2,6-diaminopimelate + 2-oxoglutarate = (S)-2,3,4,5-tetrahydrodipicolinate + L-glutamate + H2O + H(+). It functions in the pathway amino-acid biosynthesis; L-lysine biosynthesis via DAP pathway; LL-2,6-diaminopimelate from (S)-tetrahydrodipicolinate (aminotransferase route): step 1/1. Functionally, involved in the synthesis of meso-diaminopimelate (m-DAP or DL-DAP), required for both lysine and peptidoglycan biosynthesis. Catalyzes the direct conversion of tetrahydrodipicolinate to LL-diaminopimelate. This Prochlorococcus marinus (strain MIT 9313) protein is LL-diaminopimelate aminotransferase.